A 414-amino-acid chain; its full sequence is MTIKTLALQCRDAAQVVSQLSSQAKCALLQAMAAALEADAGTILAANARDLEAARAKGTASAMLDRLALDDKRLAGIAAALREVALLPDPVGRITREDVRPNGIRVQKVRVPLGVIAMIYEARPNVTADAAALCIKAGNGVILRGGSEAIHSNIAIARALQRALREANVPEAALTLVEDLRRETMLELLQLNDIVDLAIPRGGEGLIRFVAEHARVPVIKHYKGVCHLFVDASAEMELALRLLIDGKATRPSACNSLETLLVHADIAERFLPLAAQALRERKVELRGDAATRAVLPEIAPASDDDYAAEFLDLILAMRVVADLDTALAHIRQYGSDHTEVIATQDPDNAERFVQSLRSAVVMVNASSRFSDGGELGLGAEIGISTTRLHSYGPMGLEALTVERFVVRGEGQVRH.

It belongs to the gamma-glutamyl phosphate reductase family.

It localises to the cytoplasm. The enzyme catalyses L-glutamate 5-semialdehyde + phosphate + NADP(+) = L-glutamyl 5-phosphate + NADPH + H(+). The protein operates within amino-acid biosynthesis; L-proline biosynthesis; L-glutamate 5-semialdehyde from L-glutamate: step 2/2. In terms of biological role, catalyzes the NADPH-dependent reduction of L-glutamate 5-phosphate into L-glutamate 5-semialdehyde and phosphate. The product spontaneously undergoes cyclization to form 1-pyrroline-5-carboxylate. This is Gamma-glutamyl phosphate reductase from Xanthomonas oryzae pv. oryzae (strain MAFF 311018).